The sequence spans 399 residues: MSKAENTSGKQQLILRLSADTSDSLEWLIWSVSRHQTLTTGSGTLESLQAVLADYPVISARVLVPSTDVTFHTLSLPRQSRRQLLQAIPFMLEEQVASDIDQLHFAVMDMHGDNATVAVVQKSRLRAWLNQCETLGVPVETVVPDVMALPRADSAWSAISHRNLWLFRLDSGIGMAAEENWYQSLLAFQPLPAVHCYSPVPASALTWQPQPVTDLLTLAAQVNLSMSMDLRQGEYAPVKPWKQALLPWRNVLIALSAWLLLVLGESVWTHYQWYRQADYWRQESVRVYRKLFPDEKQVVNPRAQMQRHLQEVRAGVSGFALTEQMNRLQQLVAQNEGVSLQSLSYDRSRDELRLSLRATSYAQMEQFRQQAQAYFQIPPGEMKQEKDHVEGQLTLRSQP.

Topologically, residues Met1 to Pro247 are cytoplasmic. The helical transmembrane segment at Trp248–Gly264 threads the bilayer. Over Glu265–Pro399 the chain is Periplasmic.

This sequence belongs to the GSP L family. In terms of assembly, type II secretion system is composed of four main components: the outer membrane complex, the inner membrane complex, the cytoplasmic secretion ATPase and the periplasm-spanning pseudopilus. Forms homodimers. Interacts with OutM/GspM. Interacts with OutE/GspE and OutF/GspF.

It is found in the cell inner membrane. In terms of biological role, inner membrane component of the type II secretion system required for the energy-dependent secretion of extracellular factors such as proteases and toxins from the periplasm. Plays a role in the complex assembly and recruits OutM resulting in a stable complex in the inner membrane. Provides thus a link between the energy-providing OutE protein in the cytoplasm and the rest of the T2SS machinery. The sequence is that of Type II secretion system protein L (outL) from Dickeya chrysanthemi (Pectobacterium chrysanthemi).